The chain runs to 76 residues: Large ribosomal subunit protein bL31 (76 aa).

Cys16, Cys18, Cys36, and Cys39 together coordinate Zn(2+).

The protein belongs to the bacterial ribosomal protein bL31 family. Type A subfamily. In terms of assembly, part of the 50S ribosomal subunit. Zn(2+) serves as cofactor.

Its function is as follows. Binds the 23S rRNA. The chain is Large ribosomal subunit protein bL31 from Syntrophobacter fumaroxidans (strain DSM 10017 / MPOB).